The following is a 166-amino-acid chain: Interferon gamma-related (166 aa).

Positions 1-26 (MYCRLNMVYLICALLLIVSLQGTVGA) are cleaved as a signal peptide. A glycan (N-linked (GlcNAc...) asparagine) is linked at N91.

Belongs to the type II (or gamma) interferon family. Homodimer. Strongly expressed in spleen. Also detected at lower levels in gill, kidney, heart, brain and intestine. In immune cell populations, expressed at highest levels in peripheral blood leukocytes and at lower levels in splenocytes, granulocytes, monocytes and macrophages.

The protein localises to the secreted. Its function is as follows. Cytokine which binds to interferon gamma receptor 1 (ifngr1). Has activating effects on primary macrophages. Induces nitric oxide production and phagocytic responses in macrophages. Primes monocytes for production of reactive oxygen intermediates (ROI), although the effect is short-lived. Also has inhibitory effects on monocyte priming by ifng1 (interferon gamma 1) and tnfb (TNF-alpha 2). Stimulates phosphorylation of the JAK/STAT signal transducer stat1, but fails to induce stat1 nuclear localization. Promotes increased expression of a number of genes important for macrophage activity, including the interferon regulatory factors irf2 and irf9. This Carassius auratus (Goldfish) protein is Interferon gamma-related.